The sequence spans 425 residues: tRNA(Ile)-lysidine synthase (425 aa).

Residue 27 to 32 (SGGLDS) coordinates ATP.

The protein belongs to the tRNA(Ile)-lysidine synthase family.

The protein resides in the cytoplasm. The enzyme catalyses cytidine(34) in tRNA(Ile2) + L-lysine + ATP = lysidine(34) in tRNA(Ile2) + AMP + diphosphate + H(+). In terms of biological role, ligates lysine onto the cytidine present at position 34 of the AUA codon-specific tRNA(Ile) that contains the anticodon CAU, in an ATP-dependent manner. Cytidine is converted to lysidine, thus changing the amino acid specificity of the tRNA from methionine to isoleucine. The protein is tRNA(Ile)-lysidine synthase of Streptococcus pneumoniae serotype 19F (strain G54).